The primary structure comprises 249 residues: 2,3-bisphosphoglycerate-dependent phosphoglycerate mutase (249 aa).

Residues 8–15, 21–22, arginine 60, 87–90, lysine 98, 114–115, and 183–184 contribute to the substrate site; these read RHGESTWN, TG, ERHY, RR, and GN. The Tele-phosphohistidine intermediate role is filled by histidine 9. Glutamate 87 (proton donor/acceptor) is an active-site residue.

This sequence belongs to the phosphoglycerate mutase family. BPG-dependent PGAM subfamily. In terms of assembly, homodimer.

The catalysed reaction is (2R)-2-phosphoglycerate = (2R)-3-phosphoglycerate. It functions in the pathway carbohydrate degradation; glycolysis; pyruvate from D-glyceraldehyde 3-phosphate: step 3/5. In terms of biological role, catalyzes the interconversion of 2-phosphoglycerate and 3-phosphoglycerate. The protein is 2,3-bisphosphoglycerate-dependent phosphoglycerate mutase of Azoarcus sp. (strain BH72).